The following is a 147-amino-acid chain: Small ribosomal subunit protein uS12 (147 aa).

It belongs to the universal ribosomal protein uS12 family. As to quaternary structure, part of the 30S ribosomal subunit.

Its function is as follows. With S4 and S5 plays an important role in translational accuracy. Located at the interface of the 30S and 50S subunits. The chain is Small ribosomal subunit protein uS12 from Thermococcus kodakarensis (strain ATCC BAA-918 / JCM 12380 / KOD1) (Pyrococcus kodakaraensis (strain KOD1)).